Consider the following 432-residue polypeptide: Major royal jelly protein 1 (432 aa).

The N-terminal stretch at 1 to 19 is a signal peptide; that stretch reads MTRLFMLVCLGIVCQGTTG. N-linked (GlcNAc...) asparagine glycosylation is found at Asn28, Asn144, and Asn177. 3 disulfide bridges follow: Cys118–Cys150, Cys132–Cys195, and Cys329–Cys416. Pro364 lines the 24-methylenecholesterol pocket. A Histidine amide; atypical modification is found at His431. Leu432 carries the post-translational modification Leucine amide; atypical.

It belongs to the major royal jelly protein family. In terms of assembly, is present in royal jelly in different forms: monomer (55 kDa), oligomeric subunit (ca. 287-420 kDa), and water-insoluble aggregates in sediment after interaction with fatty acids. Component of the apisin heterooligomer complex consisting of 4 copies of MRJP1 and 4 copies of apisimin, associated with 8 molecules of 24-methylenecholesterol; apisimin forms a bridge connecting two MRJP1 dimers. At low pH multiple apisin octamers stack to form filaments that increase the viscosity of royal jelly; these filaments may be stabilized by bound fatty acid chains. The mandibular gland, where royal jelly is produced, has low pH conditions favouring filament formation, while the higher pH of the insect midgut favors filament disassembly. Post-translationally, N-glycosylated on Asn-28, Asn-144 and Asn-177. Glycosylation is required to prevent apisin multimers from aggregating. Jellein-2 is probably processed to yield jellein-1 and jellein-4. In terms of tissue distribution, found in and secreted from the hypopharyngeal glands of the worker honey bee (at protein level); expression peaks at 12 days post eclosion. Expressed in the brains of worker bees (at protein level); found in antennal lobe, optical lobe and a subpopulation of Kenyon cells in the mushroom body. Found in the ommatidia of worker bees (at protein level). Expressed in the spermatheca of adult queen bees (at protein level); expression levels are higher in mated queens than in virgin queens. Expressed in queen bee ovaries and male drone testes.

The protein resides in the secreted. It is found in the cytoplasm. The protein localises to the cell projection. Its subcellular location is the rhabdomere. It localises to the cytoskeleton. Functionally, most abundant protein component of royal jelly, a substance produced in the hypopharyngeal gland containing proteins, free amino acids, fatty acids, sugars and other nutrients, which is fed to developing larvae by worker nurse bees. Major royal jelly proteins (Mrjps) are high in essential amino acids and probably have a nutritional function in larval food. All larvae are fed some royal jelly (also known as worker jelly) early in their development but it forms the principal source of nutrition for larvae destined to become queen bees. Induces the differentiation of honey bee larvae into queens through an Egfr-mediated signaling pathway. Promotes body size increase by activating p70 S6 kinase, stimulates ovary development by augmenting the titer of vitellogenin (Vg) and juvenile hormone, and reduces developmental time by increasing the activity of mitogen-activated protein kinase and inducing 20-hydroxyecdysone (ecdysterone, 20E) production. Together with apisimin forms the apisin complex that polymerizes at low pH, forming a fiber network and increasing the viscosity of royal jelly. The viscous royal Jelly placed in honeycomb cells containing larvae destined to become queens acts as both a food supply and an adhesive preventing larvae from falling out; queens are reared in special large cells oriented vertically. Produced in the spermatheca of adult queen bees, along with other major royal jelly proteins, where it may act as a nutrient supply for sperm stored by mated queens, or be involved in energy metabolism. In terms of biological role, has antibacterial activity against the Gram-positive bacteria S.aureus ATCC 6535, S.saprophyticus and B.subtilis CCT2471, and the Gram-negative bacteria E.coli CCT1371, E.cloacae ATCC 23355, K.pneumoniae ATCC 13883 and P.aeruginosa ATCC 27853, and antifungal activity against C.albicans. Lack cytolytic activity and does not induce rat peritoneal mast cell degranulation. Lacks antibacterial and antifungal activity. Lacks cytolytic activity and does not induce rat peritoneal mast cell degranulation. In Apis mellifera (Honeybee), this protein is Major royal jelly protein 1.